Consider the following 707-residue polypeptide: Prolyl endopeptidase-like (707 aa).

Active-site charge relay system residues include S538, D624, and H670.

Belongs to the peptidase S9A family. As to quaternary structure, homodimer.

Its subcellular location is the cytoplasm. The protein resides in the cytosol. Serine peptidase whose precise substrate specificity remains unclear. Does not cleave peptides after a arginine or lysine residue. Regulates trans-Golgi network morphology and sorting by regulating the membrane binding of the AP-1 complex. May play a role in the regulation of synaptic vesicle exocytosis. This is Prolyl endopeptidase-like (prepl) from Xenopus laevis (African clawed frog).